The following is a 344-amino-acid chain: MNCLMFFKMLLAFSFISLFYVGNAQQSYGNSTVSALFAFGDSILDTGNNNLLLSVSKVNFYPYGRDFIGGRATGRFGNGRVFSDIIAEGLGLKNLLPAYRDPYLWNNDLTTGVCFASGGSGLDPITARTTGSIWVSDQVTDFQNYITRLNGVVGNQEQANAVISNAVYLISAGNNDIAITYFTTGARRLQYTLPAYNDQLVSWTRDLIKSLYDMGARKFAVMGTLPLGCLPGARALTRACELFVNQGAAMFNQQLSADIDNLGATFPGAKFVYVDMYNPLLGLIINPQASGFIDVADACCCTPTHLIPCLDASRYVFWDVAHPTQKSYETIAPQIIENIKAKLA.

The signal sequence occupies residues 1 to 24; the sequence is MNCLMFFKMLLAFSFISLFYVGNA. An N-linked (GlcNAc...) asparagine glycan is attached at Asn30. The Nucleophile role is filled by Ser42. Residues Asp319 and His322 contribute to the active site.

It belongs to the 'GDSL' lipolytic enzyme family.

The protein resides in the secreted. This is GDSL esterase/lipase At1g73610 from Arabidopsis thaliana (Mouse-ear cress).